The primary structure comprises 310 residues: Olfactory receptor 2A12 (310 aa).

At 1-24 the chain is on the extracellular side; it reads MESNQTWITEVILLGFQVDPALEL. N-linked (GlcNAc...) asparagine glycosylation is present at Asn4. The helical transmembrane segment at 25 to 48 threads the bilayer; that stretch reads FLFGFFLLFYSLTLMGNGIILGLI. At 49–56 the chain is on the cytoplasmic side; sequence YLDSRLHT. A helical membrane pass occupies residues 57-78; sequence PMYVFLSHLAIVDMSYASSTVP. At 79–99 the chain is on the extracellular side; it reads KMLANLVMHKKVISFAPCILQ. Residues Cys96 and Cys188 are joined by a disulfide bond. A helical membrane pass occupies residues 100–119; it reads TFLYLAFAITECLILVMMCY. At 120-138 the chain is on the cytoplasmic side; sequence DRYVAICHPLQYTLIMNWR. The chain crosses the membrane as a helical span at residues 139-157; the sequence is VCTVLASTCWIFSFLLALV. Residues 158-194 lie on the Extracellular side of the membrane; that stretch reads HITLILRLPFCGPQKINHFFCQIMSVFKLACADTRLN. A helical transmembrane segment spans residues 195 to 218; that stretch reads QVVLFAGSAFILVGPLCLVLVSYL. At 219 to 235 the chain is on the cytoplasmic side; the sequence is HILVAILRIQSGEGRRK. Residues 236 to 258 form a helical membrane-spanning segment; the sequence is AFSTCSSHLCVVGLFFGSAIVMY. The Extracellular portion of the chain corresponds to 259-271; it reads MAPKSSHSQERRK. A helical membrane pass occupies residues 272–291; the sequence is ILSLFYSLFNPILNPLIYSL. Over 292–310 the chain is Cytoplasmic; it reads RNAEVKGALKRVLWKQRSM.

Belongs to the G-protein coupled receptor 1 family.

It localises to the cell membrane. In terms of biological role, odorant receptor. The chain is Olfactory receptor 2A12 (OR2A12) from Homo sapiens (Human).